We begin with the raw amino-acid sequence, 65 residues long: Prokaryotic ubiquitin-like protein Pup (65 aa).

The interval 1–38 (MANAQQQVFGGGGGDDAENNDAPQQGSGTQQVNVTGTD) is disordered. The segment at 21–59 (DAPQQGSGTQQVNVTGTDDLLDEIDGLLETNAEEFVRSY) is ARC ATPase binding. Residues 22–34 (APQQGSGTQQVNV) show a composition bias toward polar residues. The residue at position 65 (glutamine 65) is a Deamidated glutamine. An Isoglutamyl lysine isopeptide (Gln-Lys) (interchain with K-? in acceptor proteins) cross-link involves residue glutamine 65.

The protein belongs to the prokaryotic ubiquitin-like protein family. In terms of assembly, strongly interacts with the proteasome-associated ATPase ARC through a hydrophobic interface; the interacting region of Pup lies in its C-terminal half. There is one Pup binding site per ARC hexamer ring. Is modified by deamidation of its C-terminal glutamine to glutamate by the deamidase Dop, a prerequisite to the subsequent pupylation process.

Its pathway is protein degradation; proteasomal Pup-dependent pathway. In terms of biological role, protein modifier that is covalently attached to lysine residues of substrate proteins, thereby targeting them for proteasomal degradation. The tagging system is termed pupylation. This chain is Prokaryotic ubiquitin-like protein Pup, found in Corynebacterium urealyticum (strain ATCC 43042 / DSM 7109).